A 54-amino-acid chain; its full sequence is Sec-independent protein translocase protein TatA (54 aa).

Residues 1–21 form a helical membrane-spanning segment; that stretch reads MGMSFSHLLIVLLIIFVLFGA.

Belongs to the TatA/E family. As to quaternary structure, the Tat system comprises two distinct complexes: a TatABC complex, containing multiple copies of TatA, TatB and TatC subunits, and a separate TatA complex, containing only TatA subunits. Substrates initially bind to the TatABC complex, which probably triggers association of the separate TatA complex to form the active translocon.

Its subcellular location is the cell inner membrane. Functionally, part of the twin-arginine translocation (Tat) system that transports large folded proteins containing a characteristic twin-arginine motif in their signal peptide across membranes. TatA could form the protein-conducting channel of the Tat system. This is Sec-independent protein translocase protein TatA from Rickettsia canadensis (strain McKiel).